The sequence spans 746 residues: GTPase-activating protein GYP7 (746 aa).

Phosphoserine occurs at positions 265 and 339. The Rab-GAP TBC domain occupies 385–633 (LENDSLRGKV…HIWENFWTFY (249 aa)). The interval 470-505 (TIDGLPPPPQQLPANENNSTSPESANDESDDADDGV) is disordered. Polar residues predominate over residues 481 to 491 (LPANENNSTSP).

The protein resides in the cytoplasm. Functionally, GTPase-activating protein (GAP) that most effectively accelerates the intrinsic GTPase activity of Ypt/Rab-type GTPase YPT7 involved in vacuole docking and fusion. It is also active, but to a lesser extent, on YPT31, YPT32, YPT1, YPT6 and SEC4. Provides a catalytic arginine (arginine finger) in trans to accelerate the GTP hydrolysis rate of the substrate GTPase. This Saccharomyces cerevisiae (strain ATCC 204508 / S288c) (Baker's yeast) protein is GTPase-activating protein GYP7 (GYP7).